A 343-amino-acid polypeptide reads, in one-letter code: Tetraacyldisaccharide 4'-kinase (343 aa).

Position 55 to 62 (55 to 62) interacts with ATP; that stretch reads TVGGEGKT.

Belongs to the LpxK family.

It catalyses the reaction a lipid A disaccharide + ATP = a lipid IVA + ADP + H(+). It participates in glycolipid biosynthesis; lipid IV(A) biosynthesis; lipid IV(A) from (3R)-3-hydroxytetradecanoyl-[acyl-carrier-protein] and UDP-N-acetyl-alpha-D-glucosamine: step 6/6. Transfers the gamma-phosphate of ATP to the 4'-position of a tetraacyldisaccharide 1-phosphate intermediate (termed DS-1-P) to form tetraacyldisaccharide 1,4'-bis-phosphate (lipid IVA). The sequence is that of Tetraacyldisaccharide 4'-kinase from Chelativorans sp. (strain BNC1).